The sequence spans 84 residues: Esculentin-1Vb (84 aa).

Residues Met1–Cys22 form the signal peptide. Positions Glu23–Thr36 are excised as a propeptide. A disulfide bridge links Cys78 with Cys84.

As to expression, expressed by the skin glands.

Its subcellular location is the secreted. In terms of biological role, antimicrobial peptide. This chain is Esculentin-1Vb, found in Odorrana versabilis (Chinese bamboo leaf odorous frog).